A 242-amino-acid polypeptide reads, in one-letter code: Ribonuclease 3 (242 aa).

The RNase III domain maps to 7–136 (LEALQNLLGY…LLASIYLDGG (130 aa)). E49 provides a ligand contact to Mg(2+). D53 is a catalytic residue. Positions 122 and 125 each coordinate Mg(2+). Residue E125 is part of the active site. A DRBM domain is found at 167–236 (DYKTQLQELT…AEKALQIIAA (70 aa)).

This sequence belongs to the ribonuclease III family. Homodimer. It depends on Mg(2+) as a cofactor.

It localises to the cytoplasm. It catalyses the reaction Endonucleolytic cleavage to 5'-phosphomonoester.. Its function is as follows. Digests double-stranded RNA. Involved in the processing of primary rRNA transcript to yield the immediate precursors to the large and small rRNAs (23S and 16S). Processes some mRNAs, and tRNAs when they are encoded in the rRNA operon. Processes pre-crRNA and tracrRNA of type II CRISPR loci if present in the organism. The polypeptide is Ribonuclease 3 (Syntrophobacter fumaroxidans (strain DSM 10017 / MPOB)).